We begin with the raw amino-acid sequence, 95 residues long: Cell division topological specificity factor (95 aa).

The protein belongs to the MinE family.

Functionally, prevents the cell division inhibition by proteins MinC and MinD at internal division sites while permitting inhibition at polar sites. This ensures cell division at the proper site by restricting the formation of a division septum at the midpoint of the long axis of the cell. This Synechococcus sp. (strain CC9902) protein is Cell division topological specificity factor.